Here is an 85-residue protein sequence, read N- to C-terminus: ALVLLAFQVQADPIQNTDEETKTEEQPGEEDQAVSVSFGDPEGTSLQEESLRDLVCYCRSRGCKGRERMNGTCRKGHLLYMLCCR.

A signal peptide spans A1 to A11. The propeptide occupies D12 to S50. A disordered region spans residues I14 to L46. 3 disulfides stabilise this stretch: C56/C84, C58/C73, and C63/C83.

This sequence belongs to the alpha-defensin family. Paneth cells of the small bowel.

Its subcellular location is the secreted. Functionally, probably contributes to the antimicrobial barrier function of the small bowel mucosa. This Mus musculus (Mouse) protein is Alpha-defensin 11 (Defa11).